We begin with the raw amino-acid sequence, 373 residues long: MSKRQLVTQSRRFVIKIGSALLTDNGRGLDQKAMAAWVEQIAALSKKGYEVVLVSSGAVAAGMTRLGWKSRPKAIHEQQAAAAVGQSLLIQAYEQEFQRYSKKIAQVLLDHDDLSSRQRYLNARSTLRTLMNLDVIPIINENDTVVTDEIRFGDNDTLAALVANLIEADILCILTDQKGMFDSDPRQNALAELLFEKPALSPELDNMATSGGALGRGGMISKVRAARLAARSGASTVIVGGKIPDVLPKVANGDMIGTLLYADQQPIAARKRWLAGQLQSRGVVTLDDGAVSVLRDKGKSLLPVGVKAVSGHFTRGDMVVCKDARGAEIARGLVNYNSDDARKIMGQPTTKIETLLGYKDFDELIHRDNLVLS.

K16 is a binding site for ATP. The substrate site is built by S56, D143, and N155. 175–176 provides a ligand contact to ATP; it reads TD. A PUA domain is found at 281 to 359; that stretch reads RGVVTLDDGA…TKIETLLGYK (79 aa).

Belongs to the glutamate 5-kinase family.

The protein resides in the cytoplasm. The catalysed reaction is L-glutamate + ATP = L-glutamyl 5-phosphate + ADP. It functions in the pathway amino-acid biosynthesis; L-proline biosynthesis; L-glutamate 5-semialdehyde from L-glutamate: step 1/2. In terms of biological role, catalyzes the transfer of a phosphate group to glutamate to form L-glutamate 5-phosphate. This is Glutamate 5-kinase from Teredinibacter turnerae (strain ATCC 39867 / T7901).